A 972-amino-acid polypeptide reads, in one-letter code: 116 kDa U5 small nuclear ribonucleoprotein component (972 aa).

The interval 1–53 is disordered; that stretch reads MDTDLYDEFGNYIGPELDSDDEDDELGRESKELDELEDDDDDDDMGDHDEDHP. 2 stretches are compositionally biased toward acidic residues: residues 17–26 and 34–48; these read LDSDDEDDEL and DELE…MGDH. Positions 127 to 409 constitute a tr-type G domain; sequence ELIRNVTLCG…GIHLTKEELK (283 aa). GTP is bound by residues 136–143, 204–208, and 258–261; these read GHLHHGKT, DTPGH, and NKID.

Belongs to the TRAFAC class translation factor GTPase superfamily. Classic translation factor GTPase family. EF-G/EF-2 subfamily. In terms of assembly, component of the U5 snRNP and the U4/U6-U5 tri-snRNP complex, a building block of the spliceosome. Component of the pre-catalytic, catalytic and post-catalytic spliceosome complexes. Component of the minor spliceosome, which splices U12-type introns.

The protein localises to the nucleus. Functionally, required for pre-mRNA splicing as component of the spliceosome, including pre-catalytic, catalytic and post-catalytic spliceosomal complexes. Component of the U5 snRNP and the U4/U6-U5 tri-snRNP complex, a building block of the spliceosome. As a component of the minor spliceosome, involved in the splicing of U12-type introns in pre-mRNAs. This Gallus gallus (Chicken) protein is 116 kDa U5 small nuclear ribonucleoprotein component (EFTUD2).